Here is a 363-residue protein sequence, read N- to C-terminus: Suberization-associated anionic peroxidase (363 aa).

Positions 1-20 are cleaved as a signal peptide; that stretch reads MGFRLSHLSLALSFVALALA. A glycan (N-linked (GlcNAc...) asparagine) is linked at asparagine 36. Cystine bridges form between cysteine 80–cysteine 159 and cysteine 111–cysteine 116. The active-site Proton acceptor is histidine 109. Residues aspartate 110, valine 113, glycine 115, and aspartate 117 each contribute to the Ca(2+) site. 3 N-linked (GlcNAc...) asparagine glycosylation sites follow: asparagine 126, asparagine 161, and asparagine 199. Cystine bridges form between cysteine 166–cysteine 352 and cysteine 245–cysteine 264. Residue proline 208 participates in substrate binding. Asparagine 213 and asparagine 225 each carry an N-linked (GlcNAc...) asparagine glycan. Residue histidine 238 coordinates heme b. Position 239 (threonine 239) interacts with Ca(2+). Asparagine 263 carries N-linked (GlcNAc...) asparagine glycosylation. Residues aspartate 277, threonine 279, and aspartate 284 each contribute to the Ca(2+) site.

It belongs to the peroxidase family. Classical plant (class III) peroxidase subfamily. Requires Ca(2+) as cofactor. Heme b serves as cofactor.

It localises to the secreted. It catalyses the reaction 2 a phenolic donor + H2O2 = 2 a phenolic radical donor + 2 H2O. In terms of biological role, removal of H(2)O(2), oxidation of toxic reductants, biosynthesis and degradation of lignin, suberization, auxin catabolism, response to environmental stresses such as wounding, pathogen attack and oxidative stress. These functions might be dependent on each isozyme/isoform in each plant tissue. Its function is as follows. Suggested to catalyze the deposition of the aromatic residues of suberin on the cell wall and thus play a role in cell-suberization. This chain is Suberization-associated anionic peroxidase, found in Solanum tuberosum (Potato).